The sequence spans 162 residues: Regulatory protein RecX (162 aa).

It belongs to the RecX family.

The protein localises to the cytoplasm. Its function is as follows. Modulates RecA activity. This chain is Regulatory protein RecX, found in Pectobacterium atrosepticum (strain SCRI 1043 / ATCC BAA-672) (Erwinia carotovora subsp. atroseptica).